Reading from the N-terminus, the 315-residue chain is 4-hydroxy-3-methylbut-2-enyl diphosphate reductase (315 aa).

A [4Fe-4S] cluster-binding site is contributed by Cys-12. (2E)-4-hydroxy-3-methylbut-2-enyl diphosphate-binding residues include His-41 and His-74. The dimethylallyl diphosphate site is built by His-41 and His-74. Isopentenyl diphosphate-binding residues include His-41 and His-74. Cys-96 serves as a coordination point for [4Fe-4S] cluster. Residue His-124 coordinates (2E)-4-hydroxy-3-methylbut-2-enyl diphosphate. Residue His-124 coordinates dimethylallyl diphosphate. His-124 is an isopentenyl diphosphate binding site. Residue Glu-126 is the Proton donor of the active site. Position 168 (Thr-168) interacts with (2E)-4-hydroxy-3-methylbut-2-enyl diphosphate. Cys-198 contacts [4Fe-4S] cluster. The (2E)-4-hydroxy-3-methylbut-2-enyl diphosphate site is built by Ser-226, Ser-227, Asn-228, and Ser-270. Positions 226, 227, 228, and 270 each coordinate dimethylallyl diphosphate. Ser-226, Ser-227, Asn-228, and Ser-270 together coordinate isopentenyl diphosphate.

Belongs to the IspH family. Requires [4Fe-4S] cluster as cofactor.

The catalysed reaction is isopentenyl diphosphate + 2 oxidized [2Fe-2S]-[ferredoxin] + H2O = (2E)-4-hydroxy-3-methylbut-2-enyl diphosphate + 2 reduced [2Fe-2S]-[ferredoxin] + 2 H(+). The enzyme catalyses dimethylallyl diphosphate + 2 oxidized [2Fe-2S]-[ferredoxin] + H2O = (2E)-4-hydroxy-3-methylbut-2-enyl diphosphate + 2 reduced [2Fe-2S]-[ferredoxin] + 2 H(+). It participates in isoprenoid biosynthesis; dimethylallyl diphosphate biosynthesis; dimethylallyl diphosphate from (2E)-4-hydroxy-3-methylbutenyl diphosphate: step 1/1. It functions in the pathway isoprenoid biosynthesis; isopentenyl diphosphate biosynthesis via DXP pathway; isopentenyl diphosphate from 1-deoxy-D-xylulose 5-phosphate: step 6/6. Catalyzes the conversion of 1-hydroxy-2-methyl-2-(E)-butenyl 4-diphosphate (HMBPP) into a mixture of isopentenyl diphosphate (IPP) and dimethylallyl diphosphate (DMAPP). Acts in the terminal step of the DOXP/MEP pathway for isoprenoid precursor biosynthesis. This chain is 4-hydroxy-3-methylbut-2-enyl diphosphate reductase, found in Pseudomonas putida (strain ATCC 700007 / DSM 6899 / JCM 31910 / BCRC 17059 / LMG 24140 / F1).